Consider the following 616-residue polypeptide: KIF-binding protein (616 aa).

The segment at 52–78 (EEEEESEAEGKEERRDGPESGGRRGES) is disordered. Over residues 59-78 (AEGKEERRDGPESGGRRGES) the composition is skewed to basic and acidic residues.

This sequence belongs to the KIF-binding protein family.

It is found in the cytoplasm. It localises to the cytoskeleton. Its function is as follows. Activator of KIF1B plus-end-directed microtubule motor activity. Required for organization of axonal microtubules, and axonal outgrowth and maintenance during peripheral and central nervous system development. The protein is KIF-binding protein of Xenopus tropicalis (Western clawed frog).